Reading from the N-terminus, the 302-residue chain is Nucleotide-binding protein BceJ2315_08000 (302 aa).

Position 8 to 15 (8 to 15) interacts with ATP; that stretch reads GISGSGKS. GTP is bound at residue 57–60; sequence DARS.

It belongs to the RapZ-like family.

Displays ATPase and GTPase activities. This is Nucleotide-binding protein BceJ2315_08000 from Burkholderia cenocepacia (strain ATCC BAA-245 / DSM 16553 / LMG 16656 / NCTC 13227 / J2315 / CF5610) (Burkholderia cepacia (strain J2315)).